A 251-amino-acid polypeptide reads, in one-letter code: Adenosylcobinamide-GDP ribazoletransferase (251 aa).

The next 7 membrane-spanning stretches (helical) occupy residues 36–56, 60–80, 110–130, 141–161, 181–201, 202–222, and 231–251; these read LYPF…FVLS, VPIM…TGFL, VGAF…AGMF, VLIF…VSQE, EIIL…TLGI, NYLI…LKVK, and DVAG…LGII.

This sequence belongs to the CobS family. The cofactor is Mg(2+).

It localises to the cell membrane. It catalyses the reaction alpha-ribazole + adenosylcob(III)inamide-GDP = adenosylcob(III)alamin + GMP + H(+). It carries out the reaction alpha-ribazole 5'-phosphate + adenosylcob(III)inamide-GDP = adenosylcob(III)alamin 5'-phosphate + GMP + H(+). Its pathway is cofactor biosynthesis; adenosylcobalamin biosynthesis; adenosylcobalamin from cob(II)yrinate a,c-diamide: step 7/7. Functionally, joins adenosylcobinamide-GDP and alpha-ribazole to generate adenosylcobalamin (Ado-cobalamin). Also synthesizes adenosylcobalamin 5'-phosphate from adenosylcobinamide-GDP and alpha-ribazole 5'-phosphate. The sequence is that of Adenosylcobinamide-GDP ribazoletransferase from Clostridium perfringens (strain 13 / Type A).